The sequence spans 205 residues: GTP cyclohydrolase-2 (205 aa).

49–53 (RVHSE) is a GTP binding site. Zn(2+)-binding residues include Cys54, Cys65, and Cys67. Residues Gln70, 92–94 (EGR), and Thr114 contribute to the GTP site. The Proton acceptor role is filled by Asp126. The active-site Nucleophile is Arg128. GTP contacts are provided by Thr149 and Lys154.

Belongs to the GTP cyclohydrolase II family. Zn(2+) serves as cofactor.

The enzyme catalyses GTP + 4 H2O = 2,5-diamino-6-hydroxy-4-(5-phosphoribosylamino)-pyrimidine + formate + 2 phosphate + 3 H(+). It participates in cofactor biosynthesis; riboflavin biosynthesis; 5-amino-6-(D-ribitylamino)uracil from GTP: step 1/4. Catalyzes the conversion of GTP to 2,5-diamino-6-ribosylamino-4(3H)-pyrimidinone 5'-phosphate (DARP), formate and pyrophosphate. The chain is GTP cyclohydrolase-2 from Pseudomonas syringae pv. tomato (strain ATCC BAA-871 / DC3000).